Consider the following 152-residue polypeptide: Superoxide dismutase [Cu-Zn] (152 aa).

Residue S2 is modified to N-acetylserine. The Cu cation site is built by H44, H46, and H61. An intrachain disulfide couples C55 to C144. Residues H61, H69, H78, and D81 each contribute to the Zn(2+) site. H118 contributes to the Cu cation binding site.

It belongs to the Cu-Zn superoxide dismutase family. In terms of assembly, monomer. It depends on Cu cation as a cofactor. The cofactor is Zn(2+).

Its subcellular location is the cytoplasm. The catalysed reaction is 2 superoxide + 2 H(+) = H2O2 + O2. Inhibited by KCN and diethyldithiocarbamate. In terms of biological role, destroys radicals which are normally produced within the cells and which are toxic to biological systems. The plasma superoxide dismutase has phagocytosis-stimulating activity and may play an important role in the biological defenses of the organism. This is Superoxide dismutase [Cu-Zn] from Halocynthia roretzi (Sea squirt).